Reading from the N-terminus, the 174-residue chain is Endoribonuclease YbeY (174 aa).

The Zn(2+) site is built by histidine 133, histidine 137, and histidine 143.

This sequence belongs to the endoribonuclease YbeY family. The cofactor is Zn(2+).

The protein resides in the cytoplasm. Single strand-specific metallo-endoribonuclease involved in late-stage 70S ribosome quality control and in maturation of the 3' terminus of the 16S rRNA. This Paracoccus denitrificans (strain Pd 1222) protein is Endoribonuclease YbeY.